A 478-amino-acid polypeptide reads, in one-letter code: Adenosylhomocysteinase (478 aa).

Residues Thr67, Asp144, and Glu204 each contribute to the substrate site. Thr205–Thr207 contributes to the NAD(+) binding site. Positions 234 and 238 each coordinate substrate. NAD(+) is bound by residues Asn239, Gly268–Gly273, Glu291, Asn326, Ile347–His349, and Asn392.

It belongs to the adenosylhomocysteinase family. Requires NAD(+) as cofactor.

It is found in the cytoplasm. The catalysed reaction is S-adenosyl-L-homocysteine + H2O = L-homocysteine + adenosine. The protein operates within amino-acid biosynthesis; L-homocysteine biosynthesis; L-homocysteine from S-adenosyl-L-homocysteine: step 1/1. May play a key role in the regulation of the intracellular concentration of adenosylhomocysteine. The polypeptide is Adenosylhomocysteinase (Nitrosomonas eutropha (strain DSM 101675 / C91 / Nm57)).